The following is a 376-amino-acid chain: Succinyl-diaminopimelate desuccinylase (376 aa).

Histidine 67 contributes to the Zn(2+) binding site. Residue aspartate 69 is part of the active site. Zn(2+) is bound at residue aspartate 100. The active-site Proton acceptor is glutamate 134. Residues glutamate 135, glutamate 163, and histidine 349 each coordinate Zn(2+).

Belongs to the peptidase M20A family. DapE subfamily. In terms of assembly, homodimer. Requires Zn(2+) as cofactor. The cofactor is Co(2+).

It catalyses the reaction N-succinyl-(2S,6S)-2,6-diaminopimelate + H2O = (2S,6S)-2,6-diaminopimelate + succinate. It participates in amino-acid biosynthesis; L-lysine biosynthesis via DAP pathway; LL-2,6-diaminopimelate from (S)-tetrahydrodipicolinate (succinylase route): step 3/3. Functionally, catalyzes the hydrolysis of N-succinyl-L,L-diaminopimelic acid (SDAP), forming succinate and LL-2,6-diaminopimelate (DAP), an intermediate involved in the bacterial biosynthesis of lysine and meso-diaminopimelic acid, an essential component of bacterial cell walls. This Pseudoalteromonas translucida (strain TAC 125) protein is Succinyl-diaminopimelate desuccinylase.